The sequence spans 273 residues: Homeobox protein Nkx-2.2 (273 aa).

2 disordered regions span residues 1 to 56 (MSLT…LDAV) and 91 to 131 (AASA…KRKR). Residues 20-38 (DTNDEEGSVAEGPEEESEG) are compositionally biased toward acidic residues. Positions 128–187 (KRKRRVLFSKAQTYELERRFRQQRYLSAPEREHLASLIRLTPTQVKIWFQNHRYKMKRAR) form a DNA-binding region, homeobox.

Belongs to the NK-2 homeobox family. In terms of assembly, interacts with OLIG2.

The protein localises to the nucleus. In terms of biological role, transcriptional activator involved in the development of insulin-producting beta cells in the endocrine pancreas. May also be involved in specifying diencephalic neuromeric boundaries, and in controlling the expression of genes that play a role in axonal guidance. Binds to elements within the NEUROD1 promoter. The chain is Homeobox protein Nkx-2.2 (NKX2-2) from Mesocricetus auratus (Golden hamster).